We begin with the raw amino-acid sequence, 261 residues long: Calbindin (261 aa).

Alanine 2 carries the post-translational modification N-acetylalanine. The interval 2 to 7 is interaction with RANBP9; sequence AESHLQ. EF-hand domains follow at residues 11–46, 53–88, 98–133, 142–177, and 186–221; these read ITAS…LLQA, ELSP…EENF, KSCE…LLEK, KLAE…QENF, and MCGK…LCEK. Aspartate 24, aspartate 26, serine 28, tyrosine 30, and glutamate 35 together coordinate Ca(2+). Ca(2+)-binding residues include aspartate 111, aspartate 113, serine 115, glutamate 122, aspartate 155, asparagine 157, aspartate 159, lysine 161, glutamate 166, aspartate 199, aspartate 201, asparagine 203, tyrosine 205, and glutamate 210.

The protein belongs to the calbindin family. Interacts with RANBP9. Expressed in the modiolar nerve root and in bushy neurons in the ventral cochlear nucleus (at protein level).

Functionally, buffers cytosolic calcium. May stimulate a membrane Ca(2+)-ATPase and a 3',5'-cyclic nucleotide phosphodiesterase. In Mus musculus (Mouse), this protein is Calbindin (Calb1).